The sequence spans 280 residues: 2-dehydro-3-deoxyphosphooctonate aldolase (280 aa).

Belongs to the KdsA family.

Its subcellular location is the cytoplasm. It carries out the reaction D-arabinose 5-phosphate + phosphoenolpyruvate + H2O = 3-deoxy-alpha-D-manno-2-octulosonate-8-phosphate + phosphate. The protein operates within carbohydrate biosynthesis; 3-deoxy-D-manno-octulosonate biosynthesis; 3-deoxy-D-manno-octulosonate from D-ribulose 5-phosphate: step 2/3. Its pathway is bacterial outer membrane biogenesis; lipopolysaccharide biosynthesis. In Neisseria meningitidis serogroup B (strain ATCC BAA-335 / MC58), this protein is 2-dehydro-3-deoxyphosphooctonate aldolase.